Reading from the N-terminus, the 400-residue chain is Probable protein phosphatase 2C 64 (400 aa).

The PPM-type phosphatase domain maps to 47–355; it reads DFSMAVVQAN…DDITVIVVFF (309 aa). Ser75 carries the post-translational modification Phosphoserine. Positions 86, 87, 287, and 346 each coordinate Mn(2+).

The protein belongs to the PP2C family. In terms of assembly, interacts with SAUR19. The cofactor is Mg(2+). Mn(2+) serves as cofactor.

It catalyses the reaction O-phospho-L-seryl-[protein] + H2O = L-seryl-[protein] + phosphate. The enzyme catalyses O-phospho-L-threonyl-[protein] + H2O = L-threonyl-[protein] + phosphate. In terms of biological role, dephosphorylates and represses plasma membrane H(+)-ATPases (PM H(+)-ATPases, e.g. AHA1 and AHA2), thus influencing negatively plant growth and fitness. In Arabidopsis thaliana (Mouse-ear cress), this protein is Probable protein phosphatase 2C 64.